The chain runs to 134 residues: Small ribosomal subunit protein uS8 (134 aa).

The protein belongs to the universal ribosomal protein uS8 family. As to quaternary structure, part of the 30S ribosomal subunit. Contacts proteins S5 and S12.

In terms of biological role, one of the primary rRNA binding proteins, it binds directly to 16S rRNA central domain where it helps coordinate assembly of the platform of the 30S subunit. The protein is Small ribosomal subunit protein uS8 of Fervidobacterium nodosum (strain ATCC 35602 / DSM 5306 / Rt17-B1).